The following is a 340-amino-acid chain: Lipase chaperone (340 aa).

Residues 4-24 (ILLLIPLAFAASLAWFVWLEP) form a helical membrane-spanning segment. Residues 29–51 (ETAPPASPQAGADRAPPAASAGE) are disordered. The segment covering 36 to 51 (PQAGADRAPPAASAGE) has biased composition (low complexity).

Belongs to the lipase chaperone family.

It localises to the cell inner membrane. Its function is as follows. May be involved in the folding of the extracellular lipase during its passage through the periplasm. The sequence is that of Lipase chaperone (lifO) from Pseudomonas aeruginosa (strain ATCC 15692 / DSM 22644 / CIP 104116 / JCM 14847 / LMG 12228 / 1C / PRS 101 / PAO1).